A 1070-amino-acid chain; its full sequence is MLGDGNEGISTIPGFNQIQFEGFCRFIDQGLTEELYKFPKIEDTDQEIEFQLFVETYQLVEPLIKERDAVYESLTYSSELYVSAGLIWKNSRDMQEQTIFIGNIPLMNSLGTSIVNGIYRIVINQILQSPGIYYRSELDHNGISVYTGTIISDWGGRSELEIDRKARIWARVSRKQKISILVLSSAMGLNLREILENVCYPEIFLSFLNDKERKKIGSKENSILEFYQQFACVGGDPVFSESLCKELQKKFFQQRCELGRIGRRNMNRKLNLDIPQNNTFLLPRDILAAADHLIGLKFGMGALDDMNHLKNKRIRSVADLLQDQFGLALVRLENVVRGTICGAIRHKLIPTPQNLVTSPPLTTTYESFFGLHPLSQVLDRTNPLTQIVHGRKLSYLGPGGLTGRTASFRIRDIHPSHYGRICPIDTSEGINVGLIGSLSIHARIGHWGSLESPFYEISERSTGVRMLYLSPGSDEYYMVAAGNSLALNRDIQEEQVVPARYRQEFLTIAWEQVHLRSIFPFQYFSIGASLIPFIEHNDANRALMSSNMQRQAVPLSRSEKCIVGTGLERQAALDSGALAIAEREGRIVYTNTHKILLAGNGDILSIPLVIYQRSNKNTCMHQKFRVPRGKCIKKGQILADGAATVGGELALGKNVLVAYMPWEGYNSEDAVLISERLVYEDIYTSFHIRKYEIHTHVTSQGPEKVTNEIPHLEAHLLRNLDKKGIVMLGSWVETGDILVGKLTPQVVKESSYAPEDRLLRAILGIQVSTSKETCLKLPIGGRGRVIDVRWIQKRGGSSYNPETIRVYISQKREIKVGDKVAGRHGNKGIISKILPRQDMPYLQDGRSVDMVFNPLGVPSRMNVGQIFECSLGLAGSLLDRHYRIAPFDERYEQEASRKLVFSELYEASKQTANPWVFEPEYPGKSRIFDGRTGNPFEQPVIIGKPYILKLIHQVDDKIHGRSSGHYALVTQQPLRGRAKQGGQRVGEMEVWALEGFGVAHILQEMLTYKSDHIRARQEVLGTTIIGGTIPNPEDAPESFRLLVRELRSLALELNHFLVSEKNFQINRKEA.

It belongs to the RNA polymerase beta chain family. In terms of assembly, in plastids the minimal PEP RNA polymerase catalytic core is composed of four subunits: alpha, beta, beta', and beta''. When a (nuclear-encoded) sigma factor is associated with the core the holoenzyme is formed, which can initiate transcription.

The protein resides in the plastid. Its subcellular location is the chloroplast. The enzyme catalyses RNA(n) + a ribonucleoside 5'-triphosphate = RNA(n+1) + diphosphate. Functionally, DNA-dependent RNA polymerase catalyzes the transcription of DNA into RNA using the four ribonucleoside triphosphates as substrates. The protein is DNA-directed RNA polymerase subunit beta of Solanum lycopersicum (Tomato).